The primary structure comprises 356 residues: tRNA N6-adenosine threonylcarbamoyltransferase (356 aa).

Fe cation contacts are provided by His115 and His119. Substrate is bound by residues 137–141, Asp170, Gly183, and Asn280; that span reads LVSGG. Fe cation is bound at residue Asp308.

It belongs to the KAE1 / TsaD family. It depends on Fe(2+) as a cofactor.

Its subcellular location is the cytoplasm. The catalysed reaction is L-threonylcarbamoyladenylate + adenosine(37) in tRNA = N(6)-L-threonylcarbamoyladenosine(37) in tRNA + AMP + H(+). Its function is as follows. Required for the formation of a threonylcarbamoyl group on adenosine at position 37 (t(6)A37) in tRNAs that read codons beginning with adenine. Is involved in the transfer of the threonylcarbamoyl moiety of threonylcarbamoyl-AMP (TC-AMP) to the N6 group of A37, together with TsaE and TsaB. TsaD likely plays a direct catalytic role in this reaction. In Paracoccus denitrificans (strain Pd 1222), this protein is tRNA N6-adenosine threonylcarbamoyltransferase.